The chain runs to 102 residues: Small ribosomal subunit protein uS10 (102 aa).

The protein belongs to the universal ribosomal protein uS10 family. As to quaternary structure, part of the 30S ribosomal subunit.

Involved in the binding of tRNA to the ribosomes. The sequence is that of Small ribosomal subunit protein uS10 from Thermoanaerobacter pseudethanolicus (strain ATCC 33223 / 39E) (Clostridium thermohydrosulfuricum).